A 742-amino-acid polypeptide reads, in one-letter code: MAPSFDTLSEQDLHEEEEEEIDFSDLKAQYEVKLDEGLDTFVVIDGLPIVPEESRQKLIKFLLRKLSAAGKTSEDAVFMPLNEKNMSEGFAFVEYETPEQAVAAVKQLHGTPLDKKHTLAVNKLMDIDRYGREGRIDEEYKPPTIEPFKEKEHLRSWLADPNARDQFALYRGDKVGVFWNNKNNPPENVVDRAHWTQLFVQWSPKGTYLASVHPQGIQLWGGPAFSKLKQFPHPFVSLVEFSPAENYVTTWSARPIQVEEGGSGPLSYEEDGKNIIIWDIVTGKPLRSFVSHDLAAGPAEAEAQPKKKVQWPAFKWSADEKYVARMLQGQSISIYEAPRMNLLGKTSVKIDGVMDFEWSPATVNRDGVKQYEQLLCFWTPEIGSNPARVGMMSVPSKEIVRTRNLFNVSDVKLHWQSQGTYVCVKVDRHSKSKKSMATNLEIFRVREKGVPVEVVDSLKDTVINFAWEPNGGRFVLITTGETPTGAAVPPKTAVSFFAPEKKGGSAGNFKLVRTIEKKTSNAIYWSPKGRFVVVATVHSQSSFDLDFWDMDFEGEKPEGEKDLAANLQLMKTVEHYGVTDVDWDPTGRYVVSSASVWTHSMENGWNLHTFAGQTLSENPTDKFKQFIWRPRPPTLLSKEEQKQVRKNLREYSKEFDEEDKYAVDIANTAVVEKRKRVLSEWLAWIRREKELLAEDKDAYGLPENVDDAKMAKDAPQVSEDQGETVVEEIVEEIIEENEEVIG.

The span at 1 to 10 (MAPSFDTLSE) shows a compositional bias: polar residues. Positions 1 to 20 (MAPSFDTLSEQDLHEEEEEE) are disordered. An RRM domain is found at 40–126 (TFVVIDGLPI…HTLAVNKLMD (87 aa)). WD repeat units lie at residues 193 to 230 (AHWT…KLKQ), 232 to 290 (PHPF…RSFV), 304 to 345 (QPKK…LLGK), 515 to 558 (IEKK…EKPE), and 573 to 611 (VEHY…HTFA).

This sequence belongs to the eIF-3 subunit B family. In terms of assembly, component of the eukaryotic translation initiation factor 3 (eIF-3) complex.

Its subcellular location is the cytoplasm. RNA-binding component of the eukaryotic translation initiation factor 3 (eIF-3) complex, which is involved in protein synthesis of a specialized repertoire of mRNAs and, together with other initiation factors, stimulates binding of mRNA and methionyl-tRNAi to the 40S ribosome. The eIF-3 complex specifically targets and initiates translation of a subset of mRNAs involved in cell proliferation. This chain is Eukaryotic translation initiation factor 3 subunit B (prt1), found in Aspergillus terreus (strain NIH 2624 / FGSC A1156).